The following is a 507-amino-acid chain: Alkyl hydroperoxide reductase subunit F (507 aa).

207 to 222 (DVLIVGGGPASGSAAI) lines the FAD pocket. A disulfide bridge connects residues C335 and C338. 347–361 (DVAVIGGGNSGVEAA) is a binding site for NAD(+). 467 to 477 (TNVPGIFAAGD) is an FAD binding site.

This sequence belongs to the class-II pyridine nucleotide-disulfide oxidoreductase family. As to quaternary structure, homodimer. It depends on FAD as a cofactor.

In terms of biological role, serves to protect the cell against DNA damage by alkyl hydroperoxides. It can use either NADH or NADPH as electron donor for direct reduction of redox dyes or of alkyl hydroperoxides when combined with the AhpC protein. The sequence is that of Alkyl hydroperoxide reductase subunit F (ahpF) from Staphylococcus aureus (strain NCTC 8325 / PS 47).